Consider the following 591-residue polypeptide: L-fucose isomerase (591 aa).

Active-site proton acceptor residues include Glu-337 and Asp-361. Mn(2+) is bound by residues Glu-337, Asp-361, and His-528.

The protein belongs to the L-fucose isomerase family. In terms of assembly, homohexamer. Requires Mn(2+) as cofactor.

It is found in the cytoplasm. It carries out the reaction L-fucose = L-fuculose. It catalyses the reaction D-arabinose = D-ribulose. The catalysed reaction is L-xylopyranose = L-xylulose. It functions in the pathway carbohydrate degradation; L-fucose degradation; L-lactaldehyde and glycerone phosphate from L-fucose: step 1/3. Inhibited by ribitol, L-arabitol and dulcitol. Isomerization of L-xylulose to L-xylose is inhibited by xylitol. Functionally, converts the aldose L-fucose into the corresponding ketose L-fuculose. Also converts D-arabinose into D-ribulose. In addition, catalyzes the isomerization of L-xylulose to L-xylose. This Escherichia coli (strain K12) protein is L-fucose isomerase.